A 341-amino-acid polypeptide reads, in one-letter code: ATP synthase subunit a 2 (341 aa).

A signal peptide spans 1 to 33 (MKRVKVIQIKGFFRVMALLAPLLLNAYLPVQAS). Transmembrane regions (helical) follow at residues 112–132 (VVML…VGAA), 173–193 (LPYL…GLIP), 195–215 (GATA…TFFI), 242–262 (WIIM…ALTV), 273–293 (IVIL…VAAA), and 307–327 (IFVA…FIGL).

This sequence belongs to the ATPase A chain family. As to quaternary structure, F-type ATPases have 2 components, CF(1) - the catalytic core - and CF(0) - the membrane proton channel. CF(1) has five subunits: alpha(3), beta(3), gamma(1), delta(1), epsilon(1). CF(0) has four main subunits: a, b, b' and c.

The protein localises to the cell inner membrane. In terms of biological role, key component of the proton channel; it plays a direct role in the translocation of protons across the membrane. This is ATP synthase subunit a 2 from Chlorobium luteolum (strain DSM 273 / BCRC 81028 / 2530) (Pelodictyon luteolum).